The chain runs to 927 residues: Probable RNA-dependent RNA polymerase 4 (927 aa).

The tract at residues 98–135 is disordered; that stretch reads GESPVQFPRTPGKKSCRASQAEVSLDREDPSPKFLRGD. Residues 121–135 are compositionally biased toward basic and acidic residues; sequence SLDREDPSPKFLRGD.

Belongs to the RdRP family.

It catalyses the reaction RNA(n) + a ribonucleoside 5'-triphosphate = RNA(n+1) + diphosphate. In terms of biological role, probably involved in the RNA silencing pathway and required for the generation of small interfering RNAs (siRNAs). The chain is Probable RNA-dependent RNA polymerase 4 (RDR4) from Arabidopsis thaliana (Mouse-ear cress).